A 367-amino-acid chain; its full sequence is NADH-quinone oxidoreductase subunit D (367 aa).

Belongs to the complex I 49 kDa subunit family. In terms of assembly, NDH-1 is composed of 14 different subunits. Subunits NuoB, C, D, E, F, and G constitute the peripheral sector of the complex.

The protein localises to the cell membrane. The catalysed reaction is a quinone + NADH + 5 H(+)(in) = a quinol + NAD(+) + 4 H(+)(out). In terms of biological role, NDH-1 shuttles electrons from NADH, via FMN and iron-sulfur (Fe-S) centers, to quinones in the respiratory chain. The immediate electron acceptor for the enzyme in this species is believed to be ubiquinone. Couples the redox reaction to proton translocation (for every two electrons transferred, four hydrogen ions are translocated across the cytoplasmic membrane), and thus conserves the redox energy in a proton gradient. This chain is NADH-quinone oxidoreductase subunit D, found in Dehalococcoides mccartyi (strain ATCC BAA-2266 / KCTC 15142 / 195) (Dehalococcoides ethenogenes (strain 195)).